The sequence spans 538 residues: Bifunctional purine biosynthesis protein PurH (538 aa).

One can recognise an MGS-like domain in the interval 6–158; sequence KHIPAPDLHR…KNHAYVATVV (153 aa).

Belongs to the PurH family.

It carries out the reaction (6R)-10-formyltetrahydrofolate + 5-amino-1-(5-phospho-beta-D-ribosyl)imidazole-4-carboxamide = 5-formamido-1-(5-phospho-D-ribosyl)imidazole-4-carboxamide + (6S)-5,6,7,8-tetrahydrofolate. It catalyses the reaction IMP + H2O = 5-formamido-1-(5-phospho-D-ribosyl)imidazole-4-carboxamide. It functions in the pathway purine metabolism; IMP biosynthesis via de novo pathway; 5-formamido-1-(5-phospho-D-ribosyl)imidazole-4-carboxamide from 5-amino-1-(5-phospho-D-ribosyl)imidazole-4-carboxamide (10-formyl THF route): step 1/1. Its pathway is purine metabolism; IMP biosynthesis via de novo pathway; IMP from 5-formamido-1-(5-phospho-D-ribosyl)imidazole-4-carboxamide: step 1/1. This Brucella melitensis biotype 2 (strain ATCC 23457) protein is Bifunctional purine biosynthesis protein PurH.